The sequence spans 297 residues: Phosphoribosylaminoimidazole-succinocarboxamide synthase (297 aa).

The protein belongs to the SAICAR synthetase family.

The enzyme catalyses 5-amino-1-(5-phospho-D-ribosyl)imidazole-4-carboxylate + L-aspartate + ATP = (2S)-2-[5-amino-1-(5-phospho-beta-D-ribosyl)imidazole-4-carboxamido]succinate + ADP + phosphate + 2 H(+). It participates in purine metabolism; IMP biosynthesis via de novo pathway; 5-amino-1-(5-phospho-D-ribosyl)imidazole-4-carboxamide from 5-amino-1-(5-phospho-D-ribosyl)imidazole-4-carboxylate: step 1/2. This chain is Phosphoribosylaminoimidazole-succinocarboxamide synthase, found in Mycobacterium tuberculosis (strain ATCC 25177 / H37Ra).